Reading from the N-terminus, the 82-residue chain is Cyclin-dependent kinases regulatory subunit (82 aa).

Belongs to the CKS family. In terms of assembly, forms a homohexamer that can probably bind six kinase subunits.

Functionally, binds to the catalytic subunit of the cyclin dependent kinases and is essential for their biological function. This is Cyclin-dependent kinases regulatory subunit (cks1) from Dictyostelium discoideum (Social amoeba).